Reading from the N-terminus, the 396-residue chain is L-aspartate--glyoxylate aminotransferase (396 aa).

The residue at position 196 (lysine 196) is an N6-(pyridoxal phosphate)lysine.

Belongs to the class-V pyridoxal-phosphate-dependent aminotransferase family. Pyridoxal 5'-phosphate serves as cofactor.

The enzyme catalyses oxaloacetate + glycine = glyoxylate + L-aspartate. Catalyzes the transamination of glyoxylate into glycine using L-aspartate as the preferred amino group donor. Is essential for the growth of P.denitrificans in the presence of glycolate and glyoxylate since it functions in glyoxylate assimilation via the beta-hydroxyaspartate cycle (BHAC). Can catalyze the reverse reaction in vitro, and also use L-serine and L-glutamate as amino group donor, but with much less efficiency than L-aspartate. This is L-aspartate--glyoxylate aminotransferase from Paracoccus denitrificans (strain Pd 1222).